We begin with the raw amino-acid sequence, 159 residues long: Nucleoside diphosphate kinase (159 aa).

Residues Lys-13, Phe-61, Arg-89, Thr-95, Arg-106, and Asn-116 each coordinate ATP. His-119 acts as the Pros-phosphohistidine intermediate in catalysis.

It belongs to the NDK family. Mg(2+) serves as cofactor.

It localises to the cytoplasm. The catalysed reaction is a 2'-deoxyribonucleoside 5'-diphosphate + ATP = a 2'-deoxyribonucleoside 5'-triphosphate + ADP. It carries out the reaction a ribonucleoside 5'-diphosphate + ATP = a ribonucleoside 5'-triphosphate + ADP. Major role in the synthesis of nucleoside triphosphates other than ATP. The ATP gamma phosphate is transferred to the NDP beta phosphate via a ping-pong mechanism, using a phosphorylated active-site intermediate. The polypeptide is Nucleoside diphosphate kinase (Halorubrum lacusprofundi (strain ATCC 49239 / DSM 5036 / JCM 8891 / ACAM 34)).